Here is a 50-residue protein sequence, read N- to C-terminus: Insulin (50 aa).

Disulfide bonds link Cys-7-Cys-36, Cys-19-Cys-49, and Cys-35-Cys-40.

Belongs to the insulin family. As to quaternary structure, heterodimer of a B chain and an A chain linked by two disulfide bonds.

It localises to the secreted. Functionally, insulin decreases blood glucose concentration. It increases cell permeability to monosaccharides, amino acids and fatty acids. It accelerates glycolysis, the pentose phosphate cycle, and glycogen synthesis in liver. The chain is Insulin (ins) from Oncorhynchus gorbuscha (Pink salmon).